The primary structure comprises 124 residues: Large ribosomal subunit protein bL17 (124 aa).

This sequence belongs to the bacterial ribosomal protein bL17 family. As to quaternary structure, part of the 50S ribosomal subunit. Contacts protein L32.

This Acidithiobacillus ferrooxidans (strain ATCC 23270 / DSM 14882 / CIP 104768 / NCIMB 8455) (Ferrobacillus ferrooxidans (strain ATCC 23270)) protein is Large ribosomal subunit protein bL17.